The chain runs to 257 residues: Folate receptor alpha (257 aa).

Positions methionine 1–threonine 24 are cleaved as a signal peptide. Disulfide bonds link cysteine 37-cysteine 65, cysteine 57-cysteine 105, cysteine 66-cysteine 109, cysteine 89-cysteine 175, cysteine 96-cysteine 146, cysteine 135-cysteine 209, cysteine 139-cysteine 189, and cysteine 152-cysteine 169. Asparagine 69 is a glycosylation site (N-linked (GlcNAc...) asparagine). Folate-binding positions include aspartate 103, tyrosine 107, tryptophan 124–arginine 128, histidine 157–tryptophan 162, and serine 196. Asparagine 161 carries an N-linked (GlcNAc...) asparagine glycan. The N-linked (GlcNAc...) asparagine glycan is linked to asparagine 201. Serine 234 carries GPI-anchor amidated serine lipidation. Positions glycine 235 to serine 257 are cleaved as a propeptide — removed in mature form.

It belongs to the folate receptor family. In terms of processing, the secreted form is derived from the membrane-bound form either by cleavage of the GPI anchor, or/and by proteolysis catalyzed by a metalloprotease. Primarily expressed in tissues of epithelial origin. Expression is increased in malignant tissues. Expressed in kidney, lung and cerebellum. Detected in placenta and thymus epithelium.

It is found in the cell membrane. Its subcellular location is the apical cell membrane. The protein resides in the basolateral cell membrane. The protein localises to the secreted. It localises to the cytoplasmic vesicle. It is found in the clathrin-coated vesicle. Its subcellular location is the endosome. Binds to folate and reduced folic acid derivatives and mediates delivery of 5-methyltetrahydrofolate and folate analogs into the interior of cells. Has high affinity for folate and folic acid analogs at neutral pH. Exposure to slightly acidic pH after receptor endocytosis triggers a conformation change that strongly reduces its affinity for folates and mediates their release. Required for normal embryonic development and normal cell proliferation. The protein is Folate receptor alpha (FOLR1) of Homo sapiens (Human).